Reading from the N-terminus, the 150-residue chain is UPF0178 protein PSEEN5341 (150 aa).

It belongs to the UPF0178 family.

The protein is UPF0178 protein PSEEN5341 of Pseudomonas entomophila (strain L48).